Here is a 118-residue protein sequence, read N- to C-terminus: Small ribosomal subunit protein uS13 (118 aa).

Residues 94 to 118 (SLPLRGQRTKTNARTRKGPRKPIKK) form a disordered region.

It belongs to the universal ribosomal protein uS13 family. As to quaternary structure, part of the 30S ribosomal subunit. Forms a loose heterodimer with protein S19. Forms two bridges to the 50S subunit in the 70S ribosome.

Located at the top of the head of the 30S subunit, it contacts several helices of the 16S rRNA. In the 70S ribosome it contacts the 23S rRNA (bridge B1a) and protein L5 of the 50S subunit (bridge B1b), connecting the 2 subunits; these bridges are implicated in subunit movement. Contacts the tRNAs in the A and P-sites. The sequence is that of Small ribosomal subunit protein uS13 from Idiomarina loihiensis (strain ATCC BAA-735 / DSM 15497 / L2-TR).